We begin with the raw amino-acid sequence, 685 residues long: Phenoloxidase subunit 1 (685 aa).

3 residues coordinate Cu cation: His209, His213, and His239. Glu351 functions as the Proton acceptor in the catalytic mechanism. Cu cation-binding residues include His366, His370, and His406. 2 disulfide bridges follow: Cys580-Cys622 and Cys582-Cys629.

As to quaternary structure, heterodimer. Forms a complex with an interleukin 1-like protein as a consequence of a host defense response. Cu(2+) is required as a cofactor. Post-translationally, the N-terminus is blocked. As to expression, synthesized by oenocytoids, a type of hemocyte, and released into the hemolymph plasma.

The protein resides in the secreted. It carries out the reaction 2 L-dopa + O2 = 2 L-dopaquinone + 2 H2O. It catalyses the reaction L-tyrosine + O2 = L-dopaquinone + H2O. Activated by immulectin and lipopolysaccharide. In terms of biological role, this is a copper-containing oxidase that functions in the formation of pigments such as melanins and other polyphenolic compounds. Catalyzes the rate-limiting conversions of tyrosine to DOPA, DOPA to DOPA-quinone and possibly 5,6 dihydroxyindole to indole-5'6 quinone. Binds to the surface of hemocytes and is involved in hemocyte melanization. In Manduca sexta (Tobacco hawkmoth), this protein is Phenoloxidase subunit 1.